Reading from the N-terminus, the 294-residue chain is 4-hydroxy-tetrahydrodipicolinate synthase (294 aa).

Residue threonine 45 participates in pyruvate binding. The Proton donor/acceptor role is filled by tyrosine 133. The Schiff-base intermediate with substrate role is filled by lysine 162. Isoleucine 204 lines the pyruvate pocket.

It belongs to the DapA family. As to quaternary structure, homotetramer; dimer of dimers.

It is found in the cytoplasm. The enzyme catalyses L-aspartate 4-semialdehyde + pyruvate = (2S,4S)-4-hydroxy-2,3,4,5-tetrahydrodipicolinate + H2O + H(+). It participates in amino-acid biosynthesis; L-lysine biosynthesis via DAP pathway; (S)-tetrahydrodipicolinate from L-aspartate: step 3/4. In terms of biological role, catalyzes the condensation of (S)-aspartate-beta-semialdehyde [(S)-ASA] and pyruvate to 4-hydroxy-tetrahydrodipicolinate (HTPA). This Bartonella quintana (strain Toulouse) (Rochalimaea quintana) protein is 4-hydroxy-tetrahydrodipicolinate synthase.